Here is a 1045-residue protein sequence, read N- to C-terminus: Suppression of tumorigenicity 18 protein (1045 aa).

Disordered regions lie at residues 38–90 (KKRR…NDHA), 158–228 (KAES…YNRK), and 340–364 (PRVT…RREA). A compositionally biased stretch (basic residues) spans 52–63 (NKRKSLLMKPRH). Composition is skewed to basic and acidic residues over residues 69–90 (GCKE…NDHA) and 159–177 (AESD…NGRD). 6 CCHHC-type zinc fingers span residues 357 to 400 (PRPE…PLEI), 401 to 444 (LAMH…KLAM), 713 to 756 (RDLK…LKSL), 757 to 800 (MAAN…GIKM), 805 to 848 (EEKE…QKEN), and 858 to 901 (KLNK…IKKV). Zn(2+) contacts are provided by C366, C371, H384, C390, C410, C415, H428, C434, C722, C727, H740, C746, C766, C771, H784, C790, C814, C819, H832, C838, C867, C872, H885, and C891. Residues 918-987 (IDGDEEIRHL…KELAGLSQAL (70 aa)) adopt a coiled-coil conformation.

It belongs to the MYT1 family.

The protein resides in the nucleus. Its function is as follows. Repressor that binds to DNA sequences containing a bipartite element consisting of a direct repeat of the sequence 5'-AAAGTTT-3' separated by 2-9 nucleotides. Represses basal transcription activity from target promoters. The protein is Suppression of tumorigenicity 18 protein (St18) of Mus musculus (Mouse).